The chain runs to 433 residues: Glutamyl-tRNA reductase (433 aa).

Substrate-binding positions include 49-52 (TCNR), serine 109, 114-116 (EGQ), and glutamine 120. Catalysis depends on cysteine 50, which acts as the Nucleophile. Residue 198 to 203 (GAGRMS) coordinates NADP(+).

The protein belongs to the glutamyl-tRNA reductase family. In terms of assembly, homodimer.

The catalysed reaction is (S)-4-amino-5-oxopentanoate + tRNA(Glu) + NADP(+) = L-glutamyl-tRNA(Glu) + NADPH + H(+). It participates in porphyrin-containing compound metabolism; protoporphyrin-IX biosynthesis; 5-aminolevulinate from L-glutamyl-tRNA(Glu): step 1/2. Its pathway is porphyrin-containing compound metabolism; chlorophyll biosynthesis. In terms of biological role, catalyzes the NADPH-dependent reduction of glutamyl-tRNA(Glu) to glutamate 1-semialdehyde (GSA). The protein is Glutamyl-tRNA reductase of Prochlorococcus marinus subsp. pastoris (strain CCMP1986 / NIES-2087 / MED4).